The following is an 89-amino-acid chain: Small ribosomal subunit protein uS14 (89 aa).

The protein belongs to the universal ribosomal protein uS14 family. In terms of assembly, part of the 30S ribosomal subunit. Contacts proteins S3 and S10.

Functionally, binds 16S rRNA, required for the assembly of 30S particles and may also be responsible for determining the conformation of the 16S rRNA at the A site. The sequence is that of Small ribosomal subunit protein uS14 from Aster yellows witches'-broom phytoplasma (strain AYWB).